The sequence spans 165 residues: Coatomer subunit zeta (165 aa).

This sequence belongs to the adaptor complexes small subunit family. In terms of assembly, oligomeric complex that consists of at least the alpha, beta, beta', gamma, delta, epsilon and zeta subunits.

The protein localises to the cytoplasm. The protein resides in the golgi apparatus membrane. It is found in the cytoplasmic vesicle. Its subcellular location is the COPI-coated vesicle membrane. In terms of biological role, the coatomer is a cytosolic protein complex that binds to dilysine motifs and reversibly associates with Golgi non-clathrin-coated vesicles, which further mediate biosynthetic protein transport from the ER, via the Golgi up to the trans Golgi network. Coatomer complex is required for budding from Golgi membranes, and is essential for the retrograde Golgi-to-ER transport of dilysine-tagged proteins. The zeta subunit may be involved in regulating the coat assembly and, hence, the rate of biosynthetic protein transport due to its association-dissociation properties with the coatomer complex. The sequence is that of Coatomer subunit zeta from Encephalitozoon cuniculi (strain GB-M1) (Microsporidian parasite).